A 135-amino-acid polypeptide reads, in one-letter code: Ribonuclease P protein component (135 aa).

A disordered region spans residues 115–135 (ETEPVSPVSPTSLPQNERGSP). Positions 122 to 135 (VSPTSLPQNERGSP) are enriched in polar residues.

The protein belongs to the RnpA family. Consists of a catalytic RNA component (M1 or rnpB) and a protein subunit.

It carries out the reaction Endonucleolytic cleavage of RNA, removing 5'-extranucleotides from tRNA precursor.. RNaseP catalyzes the removal of the 5'-leader sequence from pre-tRNA to produce the mature 5'-terminus. It can also cleave other RNA substrates such as 4.5S RNA. The protein component plays an auxiliary but essential role in vivo by binding to the 5'-leader sequence and broadening the substrate specificity of the ribozyme. The polypeptide is Ribonuclease P protein component (Chloroflexus aggregans (strain MD-66 / DSM 9485)).